The primary structure comprises 277 residues: Ubiquinone biosynthesis protein COQ4, mitochondrial (277 aa).

A mitochondrion-targeting transit peptide spans 1 to 14 (MLTKRALRTTDPYR). 4 residues coordinate Zn(2+): H157, D158, H161, and E173.

Belongs to the COQ4 family. As to quaternary structure, component of a multi-subunit COQ enzyme complex, composed of at least COQ3, COQ4, COQ5, COQ6, COQ7 and COQ9. Zn(2+) is required as a cofactor.

It is found in the mitochondrion inner membrane. The enzyme catalyses a 4-hydroxy-3-methoxy-5-(all-trans-polyprenyl)benzoate + H(+) = a 2-methoxy-6-(all-trans-polyprenyl)phenol + CO2. The protein operates within cofactor biosynthesis; ubiquinone biosynthesis. Its function is as follows. Lyase that catalyzes the C1-decarboxylation of 4-hydroxy-3-methoxy-5-(all-trans-polyprenyl)benzoic acid into 2-methoxy-6-(all-trans-polyprenyl)phenol during ubiquinone biosynthesis. The protein is Ubiquinone biosynthesis protein COQ4, mitochondrial of Ajellomyces capsulatus (strain NAm1 / WU24) (Darling's disease fungus).